A 326-amino-acid chain; its full sequence is Tetraacyldisaccharide 4'-kinase (326 aa).

53-60 (SVGGNGKT) provides a ligand contact to ATP.

The protein belongs to the LpxK family.

It catalyses the reaction a lipid A disaccharide + ATP = a lipid IVA + ADP + H(+). The protein operates within glycolipid biosynthesis; lipid IV(A) biosynthesis; lipid IV(A) from (3R)-3-hydroxytetradecanoyl-[acyl-carrier-protein] and UDP-N-acetyl-alpha-D-glucosamine: step 6/6. In terms of biological role, transfers the gamma-phosphate of ATP to the 4'-position of a tetraacyldisaccharide 1-phosphate intermediate (termed DS-1-P) to form tetraacyldisaccharide 1,4'-bis-phosphate (lipid IVA). The polypeptide is Tetraacyldisaccharide 4'-kinase (Actinobacillus pleuropneumoniae serotype 5b (strain L20)).